Consider the following 201-residue polypeptide: Recombination protein RecR (201 aa).

The segment at 60–75 (CQICGNIDTRDPCTIC) adopts a C4-type zinc-finger fold. The Toprim domain maps to 83–178 (TLLVVVETVA…KITRLAHGVP (96 aa)).

The protein belongs to the RecR family.

Its function is as follows. May play a role in DNA repair. It seems to be involved in an RecBC-independent recombinational process of DNA repair. It may act with RecF and RecO. The sequence is that of Recombination protein RecR from Beijerinckia indica subsp. indica (strain ATCC 9039 / DSM 1715 / NCIMB 8712).